The sequence spans 490 residues: Cardiolipin synthase 1 (490 aa).

2 consecutive transmembrane segments (helical) span residues 9-29 (ILTILLVVGFITNVVLAFVII) and 42-62 (WAWLFVLFVLPVIGFILYLFL). PLD phosphodiesterase domains are found at residues 225 to 252 (MNNRNHRKIIIIDGQIGYVGGFNVGDDY) and 403 to 430 (QNGFIHSKILMIDDEISSIGSANMDFRS). Catalysis depends on residues His-230, Lys-232, Asp-237, His-408, Lys-410, and Asp-415.

This sequence belongs to the phospholipase D family. Cardiolipin synthase subfamily.

Its subcellular location is the cell membrane. It catalyses the reaction 2 a 1,2-diacyl-sn-glycero-3-phospho-(1'-sn-glycerol) = a cardiolipin + glycerol. Catalyzes the reversible phosphatidyl group transfer from one phosphatidylglycerol molecule to another to form cardiolipin (CL) (diphosphatidylglycerol) and glycerol. This Staphylococcus epidermidis (strain ATCC 12228 / FDA PCI 1200) protein is Cardiolipin synthase 1 (cls1).